The primary structure comprises 179 residues: SADVAGAVIDGAGLGFDVLKTVLEALGNVKRKIAVGIDNESGRTWTAMNTYFRSGTSDIVLPHKVAHGKALLYNGQKNRGPVATGVVGVIAYSMSDGNTLAVLFSVPYDYNWYSNWWNVRVYKGQKRANQRMYEELYYHRSPFRGDNGWHSRSLGYGLKSRGFMNSSGHAILEIHVTKA.

An N-terminal alpha-helix that contributes to the pore region spans residues Ser-1–Val-29. Positions Gly-11–Lys-30 are N-terminal region. An an N-(acyl)-sphingosylphosphocholine-binding site is contributed by Arg-31. Residues Tyr-51 and Arg-53 each contribute to the N-acetyl-D-glucosamine 6-sulfate site. Positions 53, 54, 79, 85, 108, 113, 114, 116, 133, 137, 138, 144, and 168 each coordinate an N-(acyl)-sphingosylphosphocholine. Residues Ser-105–Arg-120 are trp-rich region, which is important for the binding to lipid membrane. Tyr-138 lines the N-acetyl-D-glucosamine 6-sulfate pocket. The short motif at Arg-144–Asp-146 is the Cell attachment site, crucial for protein stability element.

It belongs to the actinoporin family. Sea anemone subfamily. Octamer or nonamer in membranes. Monomer in the soluble state.

It localises to the secreted. It is found in the nematocyst. The protein resides in the target cell membrane. Pore-forming toxin (PFT) that consists of a crown-shaped octamer or nonamer that forms cation-selective hydrophilic pores of about 1.5 nm (inside) and 13 nm (outside) and causes cytolysis. It causes cardiac stimulation. Also causes hemolysis (HC(50)=1.6 nM). Interestingly, the Phe-16 is crucial for hemolysis. Pore formation is a multi-step process that involves specific recognition of membrane sphingomyelin (but neither cholesterol nor phosphatidylcholine) using aromatic rich region and adjacent phosphocholine (POC) binding site, firm binding to the membrane (mainly driven by hydrophobic interactions) accompanied by the transfer of the N-terminal region to the lipid-water interface and finally pore formation after oligomerization of monomers. It is probable that a dimeric form is an assembly intermediate before the complete oligomerization. The formation of stable pores occurs only in vesicles composed of DOPC/SM (there is no oligomerization when the PFT is treated with vesicles of DOPC or SM alone). The transmembrane pore displays 8 lateral perforations, one at each subunit-subunit interface, partially occupied by the acyl-chain region of a bridging lipid. Each pore contains 24 lipid molecules, firmly bound to each subunit, that is, 3 lipids (L1, L2, L3, L4 and/or L5) are associated to each subunit. Lipid L1 bridges 2 subunits, whereas lipids L2 and L3 bind to sites at single subunit. The sequence is that of DELTA-actitoxin-Afr1e from Actinia fragacea (Strawberry anemone).